The primary structure comprises 593 residues: MKNIRNFCIIAHIDHGKSTLADRLLEFTKTIQVTEGQMLDDMDLEKERGITIKSHAIQMEYEYGGEKYVLNLIDTPGHVDFSYEVSRSIAACEGALLIVDASQGVQAQTISNLYMALEHDLEIIPVLNKCDMASAMPDEVEDEIIDLLGCKHEDIIRASGKTGMGVEEILKAVVERIPHPTGDEEAPLQALIFDSVFNSFRGIIAYFKIENGVIRKGDKVKFFNTGKEYDADEIGVLKMDMIPRAELRTGDVGYIISGIKTSREVKVGDTITHIARPCEKAIAGFEEVKPMVFAGVYPIEAEDYENLRASLEKLQLNDASLTFQPESSLALGFGFRCGFLGLLHMEIVQERLDREFDMNVITTVPNVSYMVYDKQGHANEVHNPGGMPDPTLIDHIEEPFIDATIITATDYIGPIMTLCLGKRGELVRQNYVSGNRVEIHYKMPLGEIVIDFYDKLKSISKGYASFDYHQSGFRPSKLVKLDILLNGEPVDALSTLTHVDNAYNLGKRMCEKLKELIPRQQFDIAIQAAIGAKIISRETIKAVRKDVTAKCYGGDVSRKRKLLEKQKRGKKRMKQIGNVEVPQKAFLAVLKLD.

Residues 2 to 181 (KNIRNFCIIA…AVVERIPHPT (180 aa)) form the tr-type G domain. Residues 14-19 (DHGKST) and 128-131 (NKCD) contribute to the GTP site.

The protein belongs to the TRAFAC class translation factor GTPase superfamily. Classic translation factor GTPase family. LepA subfamily.

It is found in the cell inner membrane. It carries out the reaction GTP + H2O = GDP + phosphate + H(+). In terms of biological role, required for accurate and efficient protein synthesis under certain stress conditions. May act as a fidelity factor of the translation reaction, by catalyzing a one-codon backward translocation of tRNAs on improperly translocated ribosomes. Back-translocation proceeds from a post-translocation (POST) complex to a pre-translocation (PRE) complex, thus giving elongation factor G a second chance to translocate the tRNAs correctly. Binds to ribosomes in a GTP-dependent manner. This Phocaeicola vulgatus (strain ATCC 8482 / DSM 1447 / JCM 5826 / CCUG 4940 / NBRC 14291 / NCTC 11154) (Bacteroides vulgatus) protein is Elongation factor 4.